Reading from the N-terminus, the 619-residue chain is Eukaryotic translation initiation factor 2-alpha kinase 1 (619 aa).

Residues Met1 to Glu40 are disordered. Low complexity predominate over residues Ala18–Asp28. Residues Leu85–Leu104 carry the SIFI-degron motif. Positions Phe167–Phe580 constitute a Protein kinase domain. ATP is bound by residues Leu173–Val181 and Lys196. Thr283 bears the Phosphothreonine mark. The HRM 1 repeat unit spans residues Ala408–Met413. The Proton acceptor role is filled by Asp440. Residues Thr483, Thr485, and Thr490 each carry the phosphothreonine; by autocatalysis modification. An HRM 2 repeat occupies Arg549 to Ala554.

This sequence belongs to the protein kinase superfamily. Ser/Thr protein kinase family. GCN2 subfamily. In terms of assembly, synthesized in an inactive form that binds to the N-terminal domain of CDC37. Has to be associated with a multiprotein complex containing Hsp90, CDC37 and PPP5C for maturation and activation by autophosphorylation. The phosphatase PPP5C modulates this activation. Homodimer; homodimerizes in presence of heme, forming a disulfide-linked inactive homodimer. Interacts with DELE1; binds both to full-length DELE1 and processed form of DELE1 (S-DELE1) in response to stress, leading to activate its protein kinase activity and trigger the integrated stress response (ISR). In terms of processing, activated by autophosphorylation; phosphorylated predominantly on serine and threonine residues, but also on tyrosine residues. Autophosphorylation at Thr-485 is required for kinase activation. The active autophosphorylated form apparently is largely refractory to cellular heme fluctuations. Post-translationally, ubiquitinated and degraded by the SIFI complex once the mitochondrial stress has been resolved, thereby providing stress response silencing. Within the SIFI complex, UBR4 initiates ubiquitin chain that are further elongated or branched by KCMF1. As to expression, expressed predominantly in erythroid cells, mature reticulocytes, as well as fetal liver nucleated erythroid cells. At much lower levels, expressed in hepatocytes and bone marrow-derived macrophages (at protein level).

Its subcellular location is the cytoplasm. It carries out the reaction L-seryl-[protein] + ATP = O-phospho-L-seryl-[protein] + ADP + H(+). The catalysed reaction is L-threonyl-[protein] + ATP = O-phospho-L-threonyl-[protein] + ADP + H(+). In normal conditions, the protein kinase activity is inhibited; inhibition is relieved by various stress conditions. Inhibited by heme: in presence of heme, forms a disulfide-linked inactive homodimer. Heme depletion relieves inhibition and stimulates kinase activity by autophosphorylation. Inhibited by the heme metabolites biliverdin and bilirubin. Induced by oxidative stress generated by arsenite treatment. Binding of nitric oxide (NO) to the heme iron in the N-terminal heme-binding domain activates the kinase activity, while binding of carbon monoxide (CO) suppresses kinase activity. Protein kinase activity is also activated upon binding to DELE1 in response to various stress, triggering the integrated stress response (ISR): activated by full-length DELE1 in response to iron deficiency, while it is activated by the processed form of DELE1 (S-DELE1) in response to mitochondrial stress. Functionally, metabolic-stress sensing protein kinase that phosphorylates the alpha subunit of eukaryotic translation initiation factor 2 (EIF2S1/eIF-2-alpha) in response to various stress conditions. Key activator of the integrated stress response (ISR) required for adaptation to various stress, such as heme deficiency, oxidative stress, osmotic shock, mitochondrial dysfunction and heat shock. EIF2S1/eIF-2-alpha phosphorylation in response to stress converts EIF2S1/eIF-2-alpha in a global protein synthesis inhibitor, leading to a global attenuation of cap-dependent translation, while concomitantly initiating the preferential translation of ISR-specific mRNAs, such as the transcriptional activator ATF4, and hence allowing ATF4-mediated reprogramming. Acts as a key sensor of heme-deficiency: in normal conditions, binds hemin via a cysteine thiolate and histidine nitrogenous coordination, leading to inhibit the protein kinase activity. This binding occurs with moderate affinity, allowing it to sense the heme concentration within the cell: heme depletion relieves inhibition and stimulates kinase activity, activating the ISR. Thanks to this unique heme-sensing capacity, plays a crucial role to shut off protein synthesis during acute heme-deficient conditions. In red blood cells (RBCs), controls hemoglobin synthesis ensuring a coordinated regulation of the synthesis of its heme and globin moieties. It thereby plays an essential protective role for RBC survival in anemias of iron deficiency. Iron deficiency also triggers activation by full-length DELE1. Also activates the ISR in response to mitochondrial dysfunction: HRI/EIF2AK1 protein kinase activity is activated upon binding to the processed form of DELE1 (S-DELE1), thereby promoting the ATF4-mediated reprogramming. Also acts as an activator of mitophagy in response to mitochondrial damage: catalyzes phosphorylation of eIF-2-alpha (EIF2S1) following activation by S-DELE1, thereby promoting mitochondrial localization of EIF2S1, triggering PRKN-independent mitophagy. The sequence is that of Eukaryotic translation initiation factor 2-alpha kinase 1 from Mus musculus (Mouse).